The primary structure comprises 209 residues: Redox-sensing transcriptional repressor Rex (209 aa).

Positions 16-55 form a DNA-binding region, H-T-H motif; the sequence is LYYRFIQNLSLSGKQRVSSAELSEAVKVDSATIRRDFSYF. An NAD(+)-binding site is contributed by 90-95; that stretch reads GVGNLG.

This sequence belongs to the transcriptional regulatory Rex family. Homodimer.

The protein localises to the cytoplasm. Its function is as follows. Modulates transcription in response to changes in cellular NADH/NAD(+) redox state. This Bacillus mycoides (strain KBAB4) (Bacillus weihenstephanensis) protein is Redox-sensing transcriptional repressor Rex.